A 1000-amino-acid polypeptide reads, in one-letter code: uncharacterized protein (1000 aa).

Positions 787 to 809 (RQYEKLKRQRAKSETERHQERHG) are enriched in basic and acidic residues. Positions 787–812 (RQYEKLKRQRAKSETERHQERHGKLS) are disordered.

This is an uncharacterized protein from Picosynechococcus sp. (strain ATCC 27264 / PCC 7002 / PR-6) (Agmenellum quadruplicatum).